The sequence spans 356 residues: MFPSLQSFAKKILASQHVLPEDYYHILKRCGLWWYKAPISLDCKHMLIRLPYFADGLDLNTALMIAAKENNYQLIKLFTEWGANINYGYICANTQPTREFCWELGANYRLDKKKVMHMFFKFIENKTSQYIILCHKLFNENPFPTYVIIREIKSSLYWRLRRLVEDEDLLRDVSDDDMLTLYCFMVALQNDLREAVSYFYQHFKHLNTWWLICALCFNKLFDLHYLYEQEKIRIDINEMMRIACTKDNNFLTMYYCFILGADINMAMLAAIQFFNMDNLFFCIDLGANAFEEAKALAEQRDYYLISHRLSLDIYHPDPSLFTLKEANPKKIYHLLNNYKSKSMSAYLDYHINDTTS.

An ANK repeat occupies 58-90; sequence DLNTALMIAAKENNYQLIKLFTEWGANINYGYI. Asn-125 carries an N-linked (GlcNAc...) asparagine; by host glycan. A run of 2 helical transmembrane segments spans residues 206-228 and 249-271; these read LNTWWLICALCFNKLFDLHYLYE and NFLTMYYCFILGADINMAMLAAI. An N-linked (GlcNAc...) asparagine; by host glycan is attached at Asn-352.

The protein belongs to the asfivirus MGF 360 family.

The protein resides in the host membrane. Functionally, plays a role in virus cell tropism, and may be required for efficient virus replication in macrophages. This chain is Protein MGF 360-10L, found in Ornithodoros (relapsing fever ticks).